The following is a 338-amino-acid chain: Fructose-1,6-bisphosphatase class 1 1 (338 aa).

4 residues coordinate Mg(2+): glutamate 94, aspartate 116, leucine 118, and aspartate 119. Substrate-binding positions include 119–122 (DGSS), asparagine 210, and lysine 276. Glutamate 282 serves as a coordination point for Mg(2+).

It belongs to the FBPase class 1 family. As to quaternary structure, homotetramer. The cofactor is Mg(2+).

The protein resides in the cytoplasm. The enzyme catalyses beta-D-fructose 1,6-bisphosphate + H2O = beta-D-fructose 6-phosphate + phosphate. It participates in carbohydrate biosynthesis; gluconeogenesis. The sequence is that of Fructose-1,6-bisphosphatase class 1 1 from Paraburkholderia phymatum (strain DSM 17167 / CIP 108236 / LMG 21445 / STM815) (Burkholderia phymatum).